The following is a 298-amino-acid chain: MMAAERRIQPGELRHWEPMARYTSWRAGGPAERLYRPAGLADLVAFLRRLPEDEPLFWCGLGSNLLVREGGLRGTVILTQGGLDALRVEGEQVHAEAGVACGRLSRYCIRQGLAGAEFFAGIPGTLGGALAMNAGAFGGETWSRVRRVETVDRHGVLRRRGPEDFRVGYRHVSGPAGEWFVAAVLDLEPGDAQAMQARVKALLSQRNRTQPIGEPSCGSVFRNPPGDHAARLIEAAGLKGLRRGAAQVSERHANFIINTGGATPADIEALIEQVRDEVARRHGVTLVPEVHIVGEAQS.

In terms of domain architecture, FAD-binding PCMH-type spans 26-190; it reads RAGGPAERLY…VAAVLDLEPG (165 aa). Residue Arg170 is part of the active site. Ser219 functions as the Proton donor in the catalytic mechanism. Residue Glu289 is part of the active site.

This sequence belongs to the MurB family. Requires FAD as cofactor.

It is found in the cytoplasm. It catalyses the reaction UDP-N-acetyl-alpha-D-muramate + NADP(+) = UDP-N-acetyl-3-O-(1-carboxyvinyl)-alpha-D-glucosamine + NADPH + H(+). It participates in cell wall biogenesis; peptidoglycan biosynthesis. Cell wall formation. This Alkalilimnicola ehrlichii (strain ATCC BAA-1101 / DSM 17681 / MLHE-1) protein is UDP-N-acetylenolpyruvoylglucosamine reductase.